Here is a 271-residue protein sequence, read N- to C-terminus: Aquaporin-2 (271 aa).

Topologically, residues 1–11 (MWELRSIAFSR) are cytoplasmic. Residues 12-32 (AVFAEFLATLLFVFFGLGSAL) form a helical membrane-spanning segment. Over 33-40 (NWPQALPS) the chain is Extracellular. Residues 41–59 (VLQIAMAFGLGIGTLVQAL) form a helical membrane-spanning segment. The Cytoplasmic segment spans residues 60–64 (GHISG). Positions 65-74 (AHINPAVTVA) form an intramembrane region, discontinuously helical. Positions 68 to 70 (NPA) match the NPA 1 motif. Topologically, residues 75–85 (CLVGCHVSVLR) are cytoplasmic. A helical membrane pass occupies residues 86-107 (AAFYVAAQLLGAVAGAALLHEI). Residues 108–127 (TPADIRGDLAVNALSNSTTA) are Extracellular-facing. A glycan (N-linked (GlcNAc...) asparagine) is linked at Asn123. The chain crosses the membrane as a helical span at residues 128 to 148 (GQAVTVELFLTLQLVLCIFAS). At 149 to 156 (TDERRGEN) the chain is on the cytoplasmic side. The helical transmembrane segment at 157–176 (PGTPALSIGFSVALGHLLGI) threads the bilayer. Residues 177-180 (HYTG) lie on the Extracellular side of the membrane. Residues 181–193 (CSMNPARSLAPAV) constitute an intramembrane region (discontinuously helical). The short motif at 184–186 (NPA) is the NPA 2 element. At 194–201 (VTGKFDDH) the chain is on the extracellular side. The helical transmembrane segment at 202-222 (WVFWIGPLVGAILGSLLYNYV) threads the bilayer. Over 223 to 271 (LFPPAKSLSERLAVLKGLEPDTDWEEREVRRRQSVELHSPQSLPRGTKA) the chain is Cytoplasmic. The interval 248–271 (EREVRRRQSVELHSPQSLPRGTKA) is disordered. A Phosphoserine; by PKA modification is found at Ser256. Over residues 261–271 (SPQSLPRGTKA) the composition is skewed to polar residues.

The protein belongs to the MIP/aquaporin (TC 1.A.8) family. In terms of assembly, homotetramer. Interacts with micropeptide MIAC; the interaction leads to a reduction of filamentous actin fibers and inhibition of the EREG/EGFR signaling pathway. In terms of processing, ser-256 phosphorylation is necessary and sufficient for expression at the apical membrane. Endocytosis is not phosphorylation-dependent. N-glycosylated. In terms of tissue distribution, expressed in collecting tubules in kidney medulla (at protein level). Detected in kidney.

It localises to the apical cell membrane. Its subcellular location is the basolateral cell membrane. The protein resides in the cell membrane. The protein localises to the cytoplasmic vesicle membrane. It is found in the golgi apparatus. It localises to the trans-Golgi network membrane. The enzyme catalyses H2O(in) = H2O(out). It catalyses the reaction glycerol(in) = glycerol(out). Functionally, forms a water-specific channel that provides the plasma membranes of renal collecting duct with high permeability to water, thereby permitting water to move in the direction of an osmotic gradient. Plays an essential role in renal water homeostasis. Could also be permeable to glycerol. The polypeptide is Aquaporin-2 (Homo sapiens (Human)).